Here is a 279-residue protein sequence, read N- to C-terminus: Energy-coupling factor transporter ATP-binding protein EcfA1 (279 aa).

The ABC transporter domain maps to 5 to 240 (IELNNIQFNY…GEALVEMGLD (236 aa)). 40–47 (GHNGSGKS) is an ATP binding site.

The protein belongs to the ABC transporter superfamily. Energy-coupling factor EcfA family. As to quaternary structure, forms a stable energy-coupling factor (ECF) transporter complex composed of 2 membrane-embedded substrate-binding proteins (S component), 2 ATP-binding proteins (A component) and 2 transmembrane proteins (T component).

The protein resides in the cell membrane. In terms of biological role, ATP-binding (A) component of a common energy-coupling factor (ECF) ABC-transporter complex. Unlike classic ABC transporters this ECF transporter provides the energy necessary to transport a number of different substrates. This Enterococcus faecalis (strain ATCC 700802 / V583) protein is Energy-coupling factor transporter ATP-binding protein EcfA1.